Consider the following 132-residue polypeptide: Small ribosomal subunit protein uS8 (132 aa).

It belongs to the universal ribosomal protein uS8 family. Part of the 30S ribosomal subunit. Contacts proteins S5 and S12.

Functionally, one of the primary rRNA binding proteins, it binds directly to 16S rRNA central domain where it helps coordinate assembly of the platform of the 30S subunit. This chain is Small ribosomal subunit protein uS8, found in Mycoplasmopsis pulmonis (strain UAB CTIP) (Mycoplasma pulmonis).